Here is a 93-residue protein sequence, read N- to C-terminus: Phosphoribosyl-ATP pyrophosphatase (93 aa).

Belongs to the PRA-PH family.

It is found in the cytoplasm. The enzyme catalyses 1-(5-phospho-beta-D-ribosyl)-ATP + H2O = 1-(5-phospho-beta-D-ribosyl)-5'-AMP + diphosphate + H(+). The protein operates within amino-acid biosynthesis; L-histidine biosynthesis; L-histidine from 5-phospho-alpha-D-ribose 1-diphosphate: step 2/9. In Mycolicibacterium paratuberculosis (strain ATCC BAA-968 / K-10) (Mycobacterium paratuberculosis), this protein is Phosphoribosyl-ATP pyrophosphatase.